The chain runs to 159 residues: Ribosomal RNA large subunit methyltransferase H (159 aa).

Residues Leu-76, Gly-108, and 127-132 (FGRLTL) each bind S-adenosyl-L-methionine.

The protein belongs to the RNA methyltransferase RlmH family. In terms of assembly, homodimer.

It localises to the cytoplasm. It catalyses the reaction pseudouridine(1915) in 23S rRNA + S-adenosyl-L-methionine = N(3)-methylpseudouridine(1915) in 23S rRNA + S-adenosyl-L-homocysteine + H(+). Its function is as follows. Specifically methylates the pseudouridine at position 1915 (m3Psi1915) in 23S rRNA. This chain is Ribosomal RNA large subunit methyltransferase H, found in Streptococcus uberis (strain ATCC BAA-854 / 0140J).